Reading from the N-terminus, the 149-residue chain is Calmodulin-1 (149 aa).

4 consecutive EF-hand domains span residues 8-43 (EQIS…LGQN), 44-79 (PTEA…KMKD), 81-116 (DSEE…LGEK), and 117-149 (LTDE…MMAK). Positions 21, 23, 25, 27, 32, 57, 59, 61, 63, 68, 94, 96, 98, 105, 130, 132, 134, 136, and 141 each coordinate Ca(2+).

This sequence belongs to the calmodulin family. In terms of assembly, interacts with ZAR1 (via CaMBD domain). Binds to IQD1. Binds to MEE62 in a calcium-dependent manner.

It is found in the cytoplasm. The protein resides in the cell membrane. In terms of biological role, calmodulin mediates the control of a large number of enzymes, ion channels and other proteins by Ca(2+). Among the enzymes to be stimulated by the calmodulin-Ca(2+) complex are a number of protein kinases and phosphatases. The protein is Calmodulin-1 (CAM1) of Arabidopsis thaliana (Mouse-ear cress).